Reading from the N-terminus, the 186-residue chain is ATP synthase subunit delta (186 aa).

It belongs to the ATPase delta chain family. As to quaternary structure, F-type ATPases have 2 components, F(1) - the catalytic core - and F(0) - the membrane proton channel. F(1) has five subunits: alpha(3), beta(3), gamma(1), delta(1), epsilon(1). F(0) has three main subunits: a(1), b(2) and c(10-14). The alpha and beta chains form an alternating ring which encloses part of the gamma chain. F(1) is attached to F(0) by a central stalk formed by the gamma and epsilon chains, while a peripheral stalk is formed by the delta and b chains.

It is found in the cell inner membrane. In terms of biological role, f(1)F(0) ATP synthase produces ATP from ADP in the presence of a proton or sodium gradient. F-type ATPases consist of two structural domains, F(1) containing the extramembraneous catalytic core and F(0) containing the membrane proton channel, linked together by a central stalk and a peripheral stalk. During catalysis, ATP synthesis in the catalytic domain of F(1) is coupled via a rotary mechanism of the central stalk subunits to proton translocation. Functionally, this protein is part of the stalk that links CF(0) to CF(1). It either transmits conformational changes from CF(0) to CF(1) or is implicated in proton conduction. The polypeptide is ATP synthase subunit delta (Nitrobacter hamburgensis (strain DSM 10229 / NCIMB 13809 / X14)).